A 757-amino-acid polypeptide reads, in one-letter code: Catalase-peroxidase (757 aa).

The tryptophyl-tyrosyl-methioninium (Trp-Tyr) (with M-274) cross-link spans tryptophan 101–tyrosine 248. Histidine 102 acts as the Proton acceptor in catalysis. The interval serine 210–aspartate 231 is disordered. Positions glycine 212 to aspartate 231 are enriched in basic and acidic residues. The segment at residues tyrosine 248 to methionine 274 is a cross-link (tryptophyl-tyrosyl-methioninium (Tyr-Met) (with W-101)). Histidine 289 provides a ligand contact to heme b. Residues lysine 293–leucine 312 form a disordered region.

Belongs to the peroxidase family. Peroxidase/catalase subfamily. Homodimer or homotetramer. Heme b is required as a cofactor. Post-translationally, formation of the three residue Trp-Tyr-Met cross-link is important for the catalase, but not the peroxidase activity of the enzyme.

It carries out the reaction H2O2 + AH2 = A + 2 H2O. It catalyses the reaction 2 H2O2 = O2 + 2 H2O. Its function is as follows. Bifunctional enzyme with both catalase and broad-spectrum peroxidase activity. This chain is Catalase-peroxidase, found in Xylella fastidiosa (strain M12).